Consider the following 534-residue polypeptide: Apolipoprotein N-acyltransferase (534 aa).

7 consecutive transmembrane segments (helical) span residues 18 to 38, 39 to 59, 74 to 94, 105 to 125, 127 to 147, 178 to 198, and 209 to 229; these read LLAI…GFFA, AMFL…ASPD, WLFG…ALLV, LAIL…VALA, IFWS…GLME, VIGA…PALA, and ALAV…LYVA. One can recognise a CN hydrolase domain in the interval 246 to 496; it reads VQPDIDQAAK…TGFIDATVDR (251 aa). Glu-291 functions as the Proton acceptor in the catalytic mechanism. Lys-355 is a catalytic residue. The active-site Nucleophile is the Cys-408. Residues 504–524 form a helical membrane-spanning segment; that stretch reads TFPRQTYFWLTEALLILIALV.

This sequence belongs to the CN hydrolase family. Apolipoprotein N-acyltransferase subfamily.

It is found in the cell inner membrane. The enzyme catalyses N-terminal S-1,2-diacyl-sn-glyceryl-L-cysteinyl-[lipoprotein] + a glycerophospholipid = N-acyl-S-1,2-diacyl-sn-glyceryl-L-cysteinyl-[lipoprotein] + a 2-acyl-sn-glycero-3-phospholipid + H(+). Its pathway is protein modification; lipoprotein biosynthesis (N-acyl transfer). Functionally, catalyzes the phospholipid dependent N-acylation of the N-terminal cysteine of apolipoprotein, the last step in lipoprotein maturation. The sequence is that of Apolipoprotein N-acyltransferase from Rhizobium leguminosarum bv. trifolii (strain WSM2304).